The chain runs to 477 residues: Homospermidine synthase (477 aa).

The protein belongs to the saccharopine dehydrogenase family. In terms of assembly, homodimer. Requires NAD(+) as cofactor.

It catalyses the reaction 2 putrescine = sym-homospermidine + NH4(+). It carries out the reaction putrescine + spermidine = sym-homospermidine + propane-1,3-diamine. Its function is as follows. Involved in the NAD(+)-dependent synthesis of the polyamine homospermidine from putrescine. The chain is Homospermidine synthase (hss) from Blastochloris viridis (Rhodopseudomonas viridis).